Here is a 367-residue protein sequence, read N- to C-terminus: 2-aminoethylphosphonate--pyruvate transaminase (367 aa).

Position 193 is an N6-(pyridoxal phosphate)lysine (lysine 193).

It belongs to the class-V pyridoxal-phosphate-dependent aminotransferase family. PhnW subfamily. As to quaternary structure, homodimer. Pyridoxal 5'-phosphate is required as a cofactor.

The enzyme catalyses (2-aminoethyl)phosphonate + pyruvate = phosphonoacetaldehyde + L-alanine. Functionally, involved in phosphonate degradation. The chain is 2-aminoethylphosphonate--pyruvate transaminase from Vibrio vulnificus (strain CMCP6).